A 211-amino-acid chain; its full sequence is Ribosomal RNA small subunit methyltransferase G (211 aa).

S-adenosyl-L-methionine-binding positions include G81, L86, 132–133, and R147; that span reads VE.

This sequence belongs to the methyltransferase superfamily. RNA methyltransferase RsmG family.

Its subcellular location is the cytoplasm. The enzyme catalyses guanosine(527) in 16S rRNA + S-adenosyl-L-methionine = N(7)-methylguanosine(527) in 16S rRNA + S-adenosyl-L-homocysteine. In terms of biological role, specifically methylates the N7 position of guanine in position 527 of 16S rRNA. The protein is Ribosomal RNA small subunit methyltransferase G of Actinobacillus succinogenes (strain ATCC 55618 / DSM 22257 / CCUG 43843 / 130Z).